Reading from the N-terminus, the 632-residue chain is U-box domain-containing protein 14 (632 aa).

The U-box domain maps to Val-247–Glu-321. ARM repeat units follow at residues Val-377–Ile-416, Glu-418–Val-457, Asp-459–Ile-498, Gln-500–Thr-539, and Gln-541–Ile-580.

In terms of assembly, homodimer. Interacts with SNL1. Binds to SD11, SD16, SD17, SD18, SD113, SD129 and SD25. As to expression, expressed in flowers, green siliques, seeds and rosette leaves.

It catalyses the reaction S-ubiquitinyl-[E2 ubiquitin-conjugating enzyme]-L-cysteine + [acceptor protein]-L-lysine = [E2 ubiquitin-conjugating enzyme]-L-cysteine + N(6)-ubiquitinyl-[acceptor protein]-L-lysine.. It participates in protein modification; protein ubiquitination. Functions as an E3 ubiquitin ligase with specific E2 ubiquitin-conjugating enzymes. Undergoes auto-ubiquitination. The chain is U-box domain-containing protein 14 (PUB14) from Arabidopsis thaliana (Mouse-ear cress).